A 155-amino-acid polypeptide reads, in one-letter code: Probable Brix domain-containing ribosomal biogenesis protein (155 aa).

The Brix domain maps to 1 to 155 (MLLTTSRKPS…LLIRDFRVGE (155 aa)).

Functionally, probably involved in the biogenesis of the ribosome. This Methanothermobacter thermautotrophicus (strain ATCC 29096 / DSM 1053 / JCM 10044 / NBRC 100330 / Delta H) (Methanobacterium thermoautotrophicum) protein is Probable Brix domain-containing ribosomal biogenesis protein.